The primary structure comprises 269 residues: MPGVETIKSSWADEVELDYGGLPPTTENVENGHKYVTEYKYNKDDKKTKVVRTYKISKQVVPKTVAKRRTWTKFGESKSDKPGPNSHTTMVSEEIIMQFLNSKEDEKANDPLLDPTKNIAKCRICNGEHWSVNCPYKGTAMDTNLMEKKAAAAASAAVDAPKSGKYVPPFLKDSQKGGLGMRGRDDTAAIRISNLSESMTEADLEELVKKIGPQSKMYLARDKNTGLCKGFAYVHFKQRKDAAAAIEILNGHGYDHLILSVEWSKPQNN.

An RRM domain is found at 188–266 (AAIRISNLSE…LILSVEWSKP (79 aa)).

This sequence belongs to the eIF-3 subunit G family. In terms of assembly, component of the eukaryotic translation initiation factor 3 (eIF-3) complex. The eIF-3 complex interacts with pix.

It localises to the cytoplasm. In terms of biological role, RNA-binding component of the eukaryotic translation initiation factor 3 (eIF-3) complex, which is involved in protein synthesis of a specialized repertoire of mRNAs and, together with other initiation factors, stimulates binding of mRNA and methionyl-tRNAi to the 40S ribosome. The eIF-3 complex specifically targets and initiates translation of a subset of mRNAs involved in cell proliferation. This subunit can bind 18S rRNA. This Drosophila persimilis (Fruit fly) protein is Eukaryotic translation initiation factor 3 subunit G-1.